The following is a 178-amino-acid chain: Interleukin-17B (178 aa).

An N-terminal signal peptide occupies residues 1–22 (MDWPHSLLFLLAISIFLGPSQP). Residues 21 to 44 (QPRNTKGKRKGQVRPGPLAPGPHQ) are disordered. N-linked (GlcNAc...) asparagine glycosylation occurs at Asn-75. Intrachain disulfides connect Cys-121/Cys-176 and Cys-126/Cys-178.

Belongs to the IL-17 family.

Its subcellular location is the secreted. In terms of biological role, stimulates the release of tumor necrosis factor alpha and IL-1-beta from the monocytic cell line THP-1. In Mesocricetus auratus (Golden hamster), this protein is Interleukin-17B (IL17B).